A 276-amino-acid polypeptide reads, in one-letter code: Putative pyruvate, phosphate dikinase regulatory protein 1 (276 aa).

Position 150–157 (150–157) interacts with ADP; it reads GLPRTSKT.

The protein belongs to the pyruvate, phosphate/water dikinase regulatory protein family. PDRP subfamily.

The enzyme catalyses N(tele)-phospho-L-histidyl/L-threonyl-[pyruvate, phosphate dikinase] + ADP = N(tele)-phospho-L-histidyl/O-phospho-L-threonyl-[pyruvate, phosphate dikinase] + AMP + H(+). It catalyses the reaction N(tele)-phospho-L-histidyl/O-phospho-L-threonyl-[pyruvate, phosphate dikinase] + phosphate + H(+) = N(tele)-phospho-L-histidyl/L-threonyl-[pyruvate, phosphate dikinase] + diphosphate. In terms of biological role, bifunctional serine/threonine kinase and phosphorylase involved in the regulation of the pyruvate, phosphate dikinase (PPDK) by catalyzing its phosphorylation/dephosphorylation. The chain is Putative pyruvate, phosphate dikinase regulatory protein 1 from Syntrophomonas wolfei subsp. wolfei (strain DSM 2245B / Goettingen).